Consider the following 1434-residue polypeptide: Nitric oxide synthase 1 (1434 aa).

Residues 1-205 are interaction with NOSIP; sequence MEDHMFGVQQ…LQGRGENNEL (205 aa). In terms of domain architecture, PDZ spans 17–99; it reads SVRLFKRKVG…ETHVVLILRG (83 aa). Disordered stretches follow at residues 112-192 and 276-302; these read TGDG…KKAT and NNPY…PSKC. An interaction with DYNLL1/PIN region spans residues 163 to 245; it reads YDDGQEAGSL…MGIQVDRDLD (83 aa). Polar residues predominate over residues 285-299; sequence PPTSGKQSPTKNGSP. Residue serine 339 coordinates (6R)-L-erythro-5,6,7,8-tetrahydrobiopterin. A heme b-binding site is contributed by cysteine 420. Residues glutamine 483, tryptophan 592, tyrosine 593, and glutamate 597 each contribute to the L-arginine site. (6R)-L-erythro-5,6,7,8-tetrahydrobiopterin is bound by residues valine 682, tryptophan 683, and phenylalanine 696. Heme b is bound at residue tyrosine 711. Residues 730-750 are calmodulin-binding; it reads KRRAIGFKKLAEAVKFSAKLM. Positions 760–940 constitute a Flavodoxin-like domain; the sequence is ATILYATETG…AFRTWAKKVF (181 aa). FMN is bound by residues threonine 766, glutamate 767, threonine 768, lysine 770, serine 771, serine 812, threonine 813, and glycine 817. Phosphoserine occurs at positions 852, 862, and 863. Residues serine 891, histidine 896, cysteine 898, glutamate 924, and glutamine 928 each coordinate FMN. One can recognise an FAD-binding FR-type domain in the interval 995 to 1242; the sequence is KRVSAARLLS…VRGAPSFHLP (248 aa). An NADP(+)-binding site is contributed by arginine 1015. FAD contacts are provided by histidine 1037, arginine 1178, tyrosine 1179, tyrosine 1180, serine 1181, threonine 1196, and alanine 1198. Serine 1201 provides a ligand contact to NADP(+). The FAD site is built by tyrosine 1202, valine 1215, cysteine 1216, and serine 1217. NADP(+) is bound by residues threonine 1256, arginine 1289, serine 1318, arginine 1319, lysine 1325, tyrosine 1327, glutamine 1329, aspartate 1362, threonine 1403, and arginine 1405.

The protein belongs to the NOS family. Homodimer. Interacts with DLG4; the interaction possibly being prevented by the association between NOS1 and CAPON. Forms a ternary complex with CAPON and RASD1. Forms a ternary complex with CAPON and SYN1. Interacts with ZDHHC23. Interacts with NOSIP; which may impair its synaptic location. Interacts with HTR4. Interacts with SLC6A4. Interacts with VAC14. Interacts (via N-terminal domain) with DLG4 (via N-terminal tandem pair of PDZ domains). Interacts with SLC6A4. Forms a complex with ASL, ASS1 and SLC7A1; the complex regulates cell-autonomous L-arginine synthesis and citrulline recycling while channeling extracellular L-arginine to nitric oxide synthesis pathway. Interacts with DMD; localizes NOS1 to sarcolemma in muscle cells. Interacts with DYNLL1; inhibits the nitric oxide synthase activity. Requires heme b as cofactor. FAD is required as a cofactor. It depends on FMN as a cofactor. The cofactor is (6R)-L-erythro-5,6,7,8-tetrahydrobiopterin. Post-translationally, ubiquitinated; mediated by STUB1/CHIP in the presence of Hsp70 and Hsp40 (in vitro). Isoform 1 is ubiquitously expressed: detected in skeletal muscle and brain, also in testis, lung and kidney, and at low levels in heart, adrenal gland and retina. Not detected in the platelets. Isoform 3 is expressed only in testis. Isoform 4 is detected in testis, skeletal muscle, lung, and kidney, at low levels in the brain, but not in the heart and adrenal gland.

It localises to the cell membrane. The protein resides in the sarcolemma. It is found in the cell projection. The protein localises to the dendritic spine. It carries out the reaction 2 L-arginine + 3 NADPH + 4 O2 + H(+) = 2 L-citrulline + 2 nitric oxide + 3 NADP(+) + 4 H2O. Stimulated by calcium/calmodulin. Inhibited by DYNLL1 that prevents the dimerization of the protein. Inhibited by NOSIP. In terms of biological role, produces nitric oxide (NO) which is a messenger molecule with diverse functions throughout the body. In the brain and peripheral nervous system, NO displays many properties of a neurotransmitter. Probably has nitrosylase activity and mediates cysteine S-nitrosylation of cytoplasmic target proteins such SRR. This is Nitric oxide synthase 1 from Homo sapiens (Human).